The following is a 311-amino-acid chain: tRNA-cytidine(32) 2-sulfurtransferase (311 aa).

Residues 47 to 52 carry the PP-loop motif motif; that stretch reads SGGKDS. Residues Cys122, Cys125, and Cys213 each coordinate [4Fe-4S] cluster.

It belongs to the TtcA family. As to quaternary structure, homodimer. Mg(2+) serves as cofactor. [4Fe-4S] cluster is required as a cofactor.

The protein resides in the cytoplasm. The enzyme catalyses cytidine(32) in tRNA + S-sulfanyl-L-cysteinyl-[cysteine desulfurase] + AH2 + ATP = 2-thiocytidine(32) in tRNA + L-cysteinyl-[cysteine desulfurase] + A + AMP + diphosphate + H(+). It functions in the pathway tRNA modification. Functionally, catalyzes the ATP-dependent 2-thiolation of cytidine in position 32 of tRNA, to form 2-thiocytidine (s(2)C32). The sulfur atoms are provided by the cysteine/cysteine desulfurase (IscS) system. The protein is tRNA-cytidine(32) 2-sulfurtransferase of Escherichia fergusonii (strain ATCC 35469 / DSM 13698 / CCUG 18766 / IAM 14443 / JCM 21226 / LMG 7866 / NBRC 102419 / NCTC 12128 / CDC 0568-73).